We begin with the raw amino-acid sequence, 653 residues long: Bifunctional lysine-specific demethylase and histidyl-hydroxylase NO66 (653 aa).

Positions 1-12 (MKKATTSAAAKS) are enriched in low complexity. 2 disordered regions span residues 1–50 (MKKA…DMLA) and 65–137 (FDDD…LERT). Residues 13–26 (QGNSKMQKNANNGT) are compositionally biased toward polar residues. The residue at position 44 (S44) is a Phosphoserine. Over residues 72–86 (STSKKTQSGSAAAAK) the composition is skewed to low complexity. The residue at position 131 (S131) is a Phosphoserine. T137 is modified (phosphothreonine). S138 bears the Phosphoserine mark. Residues 184 to 208 (AEPTEEGNNNNDEKETETIETHKAD) form a disordered region. The segment covering 194–208 (NDEKETETIETHKAD) has biased composition (basic and acidic residues). In terms of domain architecture, JmjC spans 300–450 (FYSDGCSIRL…NLLETLMPMV (151 aa)). Fe cation is bound by residues H351, D353, and H416.

Belongs to the ROX family. NO66 subfamily. The cofactor is Fe(2+).

It localises to the nucleus. It catalyses the reaction N(6),N(6)-dimethyl-L-lysyl(36)-[histone H3] + 2 2-oxoglutarate + 2 O2 = L-lysyl(36)-[histone H3] + 2 formaldehyde + 2 succinate + 2 CO2. Oxygenase that can act as both a histone lysine demethylase and a ribosomal histidine hydroxylase. Specifically demethylates 'Lys-4' (H3K4me) and 'Lys-36' (H3K36me) of histone H3, thereby playing a central role in histone code. The protein is Bifunctional lysine-specific demethylase and histidyl-hydroxylase NO66 of Drosophila melanogaster (Fruit fly).